The following is a 426-amino-acid chain: 6-Hydroxy-7-prenyldeoxybrevianamide E synthase notC (426 aa).

Glu-94 provides a ligand contact to substrate. Residues Arg-105, Lys-191, and Tyr-193 each contribute to the dimethylallyl diphosphate site. Tyr-195 lines the substrate pocket. Dimethylallyl diphosphate-binding residues include Lys-267, Tyr-269, Gln-352, Tyr-354, Tyr-418, and Tyr-422.

This sequence belongs to the tryptophan dimethylallyltransferase family.

It catalyses the reaction 6-hydroxydeoxybrevianamide E + dimethylallyl diphosphate = notoamide S + diphosphate. It functions in the pathway alkaloid biosynthesis. Addition of 5 mM Mg(2+), Ca(2+) or Mn(2+) slightly enhances catalysis (about 100-120%). Significant reduction of enzyme activity (2%-35%) is observed with Cu(2+), Zn(2+), Fe(2+), or Sn(2+) (5 mM). In terms of biological role, prenyltransferase; part of the gene cluster that mediates the biosynthesis of notoamide, a fungal indole alkaloid that belongs to a family of natural products containing a characteristic bicyclo[2.2.2]diazaoctane core. The first step of notoamide biosynthesis involves coupling of L-proline and L-tryptophan by the bimodular NRPS notE, to produce cyclo-L-tryptophan-L-proline called brevianamide F. The reverse prenyltransferase notF then acts as a deoxybrevianamide E synthase and converts brevianamide F to deoxybrevianamide E via reverse prenylation at C-2 of the indole ring leading to the bicyclo[2.2.2]diazaoctane core. Deoxybrevianamide E is further hydroxylated at C-6 of the indole ring, likely catalyzed by the cytochrome P450 monooxygenase notG, to yield 6-hydroxy-deoxybrevianamide E. 6-hydroxy-deoxybrevianamide E is a specific substrate of the prenyltransferase notC for normal prenylation at C-7 to produce 6-hydroxy-7-prenyl-deoxybrevianamide, also called notoamide S. As the proposed pivotal branching point in notoamide biosynthesis, notoamide S can be diverted to notoamide E through an oxidative pyran ring closure putatively catalyzed by either notH cytochrome P450 monooxygenase or the notD FAD-linked oxidoreductase. This step would be followed by an indole 2,3-epoxidation-initiated pinacol-like rearrangement catalyzed by the notB FAD-dependent monooxygenase leading to the formation of notoamide C and notoamide D. On the other hand notoamide S is converted to notoamide T by notH (or notD), a bifunctional oxidase that also functions as the intramolecular Diels-Alderase responsible for generation of (+)-notoamide T. To generate antipodal (-)-notoaminide T, notH' (or notD') in Aspergillus versicolor is expected to catalyze a Diels-Alder reaction leading to the opposite stereochemistry. The remaining oxidoreductase notD (or notH) likely catalyzes the oxidative pyran ring formation to yield (+)-stephacidin A. The FAD-dependent monooxygenase notI is highly similar to notB and is predicted to catalyze a similar conversion from (+)-stephacidin A to (-)-notoamide B via the 2,3-epoxidation of (+)-stephacidin A followed by a pinacol-type rearrangement. Finally, it remains unclear which enzyme could be responsible for the final hydroxylation steps leading to notoamide A and sclerotiamide. The protein is 6-Hydroxy-7-prenyldeoxybrevianamide E synthase notC of Aspergillus sp. (strain MF297-2).